Consider the following 89-residue polypeptide: Small ribosomal subunit protein bS16c (89 aa).

It belongs to the bacterial ribosomal protein bS16 family.

The protein localises to the plastid. It localises to the chloroplast. The sequence is that of Small ribosomal subunit protein bS16c from Drimys granadensis.